The chain runs to 687 residues: Light-independent protochlorophyllide reductase subunit B (687 aa).

[4Fe-4S] cluster is bound at residue Asp36. The active-site Proton donor is the Asp441. 576 to 577 (GM) contacts substrate.

It belongs to the ChlB/BchB/BchZ family. Protochlorophyllide reductase is composed of three subunits; ChlL, ChlN and ChlB. Forms a heterotetramer of two ChlB and two ChlN subunits. It depends on [4Fe-4S] cluster as a cofactor.

It is found in the plastid. The protein resides in the chloroplast. It catalyses the reaction chlorophyllide a + oxidized 2[4Fe-4S]-[ferredoxin] + 2 ADP + 2 phosphate = protochlorophyllide a + reduced 2[4Fe-4S]-[ferredoxin] + 2 ATP + 2 H2O. Its pathway is porphyrin-containing compound metabolism; chlorophyll biosynthesis (light-independent). In terms of biological role, component of the dark-operative protochlorophyllide reductase (DPOR) that uses Mg-ATP and reduced ferredoxin to reduce ring D of protochlorophyllide (Pchlide) to form chlorophyllide a (Chlide). This reaction is light-independent. The NB-protein (ChlN-ChlB) is the catalytic component of the complex. This is Light-independent protochlorophyllide reductase subunit B from Chlamydomonas reinhardtii (Chlamydomonas smithii).